The sequence spans 509 residues: ATP synthase subunit alpha (509 aa).

Residue Gly-169–Thr-176 participates in ATP binding.

The protein belongs to the ATPase alpha/beta chains family. In terms of assembly, F-type ATPases have 2 components, CF(1) - the catalytic core - and CF(0) - the membrane proton channel. CF(1) has five subunits: alpha(3), beta(3), gamma(1), delta(1), epsilon(1). CF(0) has three main subunits: a(1), b(2) and c(9-12). The alpha and beta chains form an alternating ring which encloses part of the gamma chain. CF(1) is attached to CF(0) by a central stalk formed by the gamma and epsilon chains, while a peripheral stalk is formed by the delta and b chains.

Its subcellular location is the cell inner membrane. It carries out the reaction ATP + H2O + 4 H(+)(in) = ADP + phosphate + 5 H(+)(out). Produces ATP from ADP in the presence of a proton gradient across the membrane. The alpha chain is a regulatory subunit. This chain is ATP synthase subunit alpha, found in Xanthobacter autotrophicus (strain ATCC BAA-1158 / Py2).